We begin with the raw amino-acid sequence, 204 residues long: Transcription factor bHLH120 (204 aa).

2 disordered regions span residues 1–27 (MNPS…KKEK) and 93–116 (KREI…RSEP). The bHLH domain occupies 26-78 (EKKLLHRNIERQRRQEMAILFASLRSQLPLKYIKGKRAMSDHVNGAVSFIKDT).

In terms of assembly, homodimer.

The protein localises to the nucleus. The chain is Transcription factor bHLH120 (BHLH120) from Arabidopsis thaliana (Mouse-ear cress).